We begin with the raw amino-acid sequence, 351 residues long: Leukotriene B4 receptor 1 (351 aa).

The Extracellular segment spans residues 1–21 (MAANTTSPAAPSSPGGMSLSL). N-linked (GlcNAc...) asparagine glycosylation occurs at N4. Residues 22–44 (LPIVLLSVALAVGLPGNSFVVWS) traverse the membrane as a helical segment. Topologically, residues 45–56 (ILKRMQKRTVTA) are cytoplasmic. Residues 57-77 (LLVLNLALADLAVLLTAPFFL) traverse the membrane as a helical segment. Residues 78 to 93 (HFLARGTWSFREMGCR) lie on the Extracellular side of the membrane. Residues 94–115 (LCHYVCGISMYASVLLITIMSL) traverse the membrane as a helical segment. Topologically, residues 116–140 (DRSLAVARPFMSQKVRTKAFARWVL) are cytoplasmic. The chain crosses the membrane as a helical span at residues 141-161 (AGIWVVSFLLAIPVLVYRTVK). At 162 to 179 (WNNRTLICAPNYPNKEHK) the chain is on the extracellular side. N-linked (GlcNAc...) asparagine glycosylation occurs at N164. Residues 180–200 (VFHLLFEAITGFLLPFLAVVA) form a helical membrane-spanning segment. At 201–222 (SYSDIGRRLQARRFRRSRRTGR) the chain is on the cytoplasmic side. A helical membrane pass occupies residues 223–243 (LVVLIILAFAAFWLPYHLVNL). Topologically, residues 244-268 (VEAGRTVAGWDKNSPAGQRLRLARY) are extracellular. A helical transmembrane segment spans residues 269–289 (VLIALAFLSSSVNPVLYACAG). Topologically, residues 290–351 (GGLLRSAGVG…TSSTIPESSK (62 aa)) are cytoplasmic. Polar residues-rich tracts occupy residues 311-326 (EVSSTRRGGTLVQTPK) and 339-351 (SFMTSSTIPESSK). Residues 311-351 (EVSSTRRGGTLVQTPKDTPACPEPGPTDSFMTSSTIPESSK) form a disordered region.

The protein belongs to the G-protein coupled receptor 1 family. Phosphorylated by GRK6 upon leukotriene B4 binding; which promotes desensitization. In terms of tissue distribution, highly expressed on activated leukocytes, including eosinophils.

It localises to the cell membrane. Receptor for leukotriene B4, a potent chemoattractant involved in inflammation and immune response. The protein is Leukotriene B4 receptor 1 (Ltb4r) of Mus musculus (Mouse).